A 345-amino-acid polypeptide reads, in one-letter code: D-alanine--D-alanine ligase (345 aa).

Residues 133-332 (KWLCHARGVK…LPHTKRAKVT (200 aa)) enclose the ATP-grasp domain. Position 160–211 (160–211 (AYPIIVKPSRLGSSIGVSIVKDESKLDYALDSAFEFDNTVIVEPFLEGVKEY)) interacts with ATP. Mg(2+)-binding residues include Asp-284, Glu-296, and Asn-298.

It belongs to the D-alanine--D-alanine ligase family. The cofactor is Mg(2+). Mn(2+) is required as a cofactor.

The protein resides in the cytoplasm. It carries out the reaction 2 D-alanine + ATP = D-alanyl-D-alanine + ADP + phosphate + H(+). The protein operates within cell wall biogenesis; peptidoglycan biosynthesis. In terms of biological role, cell wall formation. This chain is D-alanine--D-alanine ligase, found in Sulfurimonas denitrificans (strain ATCC 33889 / DSM 1251) (Thiomicrospira denitrificans (strain ATCC 33889 / DSM 1251)).